The primary structure comprises 178 residues: Prion-like protein doppel (178 aa).

A signal peptide spans 1-25 (MRKHLGGCWLAIVCVLLFSQLSSVK). The flexible tail stretch occupies residues 27–50 (RGIKHRIKWNRKVLPSTSQVTEAH). The segment at 51 to 154 (TAEIRPGAFI…KHCDFWLERG (104 aa)) is globular. 2 disulfides stabilise this stretch: cysteine 94/cysteine 147 and cysteine 108/cysteine 142. N-linked (GlcNAc...) asparagine glycosylation is found at asparagine 98 and asparagine 110. Residues 124–141 (KQDNKLYQRVLWQLIREL) form a cu(2+) binding region. Glycine 154 carries the GPI-anchor amidated glycine lipid modification. Residues 155–178 (AGLQVTLDQPMMLCLLVFIWFIVK) constitute a propeptide, removed in mature form.

It belongs to the prion family. Post-translationally, N-glycosylated. O-glycosylated. In terms of tissue distribution, strongly expressed in testis. Detected at low levels in lymph node, spleen and ovary.

The protein localises to the cell membrane. Functionally, required for normal acrosome reaction and for normal male fertility. Can bind Cu(2+). The sequence is that of Prion-like protein doppel (PRND) from Ovis aries (Sheep).